We begin with the raw amino-acid sequence, 829 residues long: Probable methyltransferase PMT26 (829 aa).

At 1–17 the chain is on the cytoplasmic side; the sequence is MAQPRYTRIDNRRPSSN. The helical; Signal-anchor for type II membrane protein transmembrane segment at 18–38 threads the bilayer; it reads YCSTVTVVVFVALCLVGIWMM. The Lumenal portion of the chain corresponds to 39-829; the sequence is TSSSVGPAQN…EVETLTYAIG (791 aa). Residues 55–258 form a disordered region; sequence DNKDGIKKQM…TSGDLSPPGA (204 aa). 4 stretches are compositionally biased toward basic and acidic residues: residues 85 to 143, 151 to 160, 168 to 177, and 187 to 231; these read NEDK…DSKS, LDEKKDLKDN, TNEKQTKPET, and ENQK…KENT. N-linked (GlcNAc...) asparagine glycans are attached at residues Asn-215, Asn-247, Asn-264, and Asn-270. A compositionally biased stretch (polar residues) spans 241–252; that stretch reads QEGQSKNETSGD. A disordered region spans residues 271-291; the sequence is GSFSTQATESKNEKEAQKGSG. Residues 280 to 291 are compositionally biased toward basic and acidic residues; it reads SKNEKEAQKGSG. N-linked (GlcNAc...) asparagine glycans are attached at residues Asn-302, Asn-579, Asn-595, and Asn-756.

This sequence belongs to the methyltransferase superfamily.

It localises to the golgi apparatus membrane. This is Probable methyltransferase PMT26 from Arabidopsis thaliana (Mouse-ear cress).